A 529-amino-acid polypeptide reads, in one-letter code: GTPase Obg (529 aa).

In terms of domain architecture, Obg spans 2–159; the sequence is PTFVDRVVLH…LDAVLELKTV (158 aa). The tract at residues 62–86 is disordered; sequence FHPHQRASRGRPGQGSNRHGADGAD. Residues 160–332 enclose the OBG-type G domain; sequence ADVALVGFPS…LSLALADLVA (173 aa). GTP is bound by residues 166–173, 191–195, 213–216, 284–287, and 313–315; these read GFPSAGKS, FTTLV, DVPG, NKID, and STA. Mg(2+) contacts are provided by S173 and T193. Positions 350 to 427 constitute an OCT domain; sequence PRAVNEPDFT…IGEVTFDWEP (78 aa). Disordered regions lie at residues 434–494 and 506–529; these read LGNG…DRLR and ARRAAAVVDPAVRGEPAGRGEEEG. Composition is skewed to low complexity over residues 461–472 and 508–520; these read AGTAASGAAPSP and RAAAVVDPAVRGE.

The protein belongs to the TRAFAC class OBG-HflX-like GTPase superfamily. OBG GTPase family. Monomer. The cofactor is Mg(2+).

The protein resides in the cytoplasm. Its function is as follows. An essential GTPase which binds GTP, GDP and possibly (p)ppGpp with moderate affinity, with high nucleotide exchange rates and a fairly low GTP hydrolysis rate. Plays a role in control of the cell cycle, stress response, ribosome biogenesis and in those bacteria that undergo differentiation, in morphogenesis control. The chain is GTPase Obg from Frankia casuarinae (strain DSM 45818 / CECT 9043 / HFP020203 / CcI3).